A 170-amino-acid chain; its full sequence is MNINRNRLVSNLIFISILVFFDQWSKYLVVTYVRLGTEYLSFFGDLFKIIHVRNTGVLFSLGSNIDSSLKNLFFLIIPIIILVFVFSFSLKENNKVSRFALILILSGGIGNIIDRLFRPLGVVDFLDVKFFGIFGLQRWPTFNFADSYVVVGMIVFIIYDLFTKDKSTNL.

The next 5 helical transmembrane spans lie at 13–33 (IFISILVFFDQWSKYLVVTYV), 72–92 (LFFLIIPIIILVFVFSFSLKE), 96–113 (VSRFALILILSGGIGNII), 116–136 (LFRPLGVVDFLDVKFFGIFGL), and 142–162 (FNFADSYVVVGMIVFIIYDLF). Active-site residues include D124 and D146.

This sequence belongs to the peptidase A8 family.

The protein resides in the cell inner membrane. The enzyme catalyses Release of signal peptides from bacterial membrane prolipoproteins. Hydrolyzes -Xaa-Yaa-Zaa-|-(S,diacylglyceryl)Cys-, in which Xaa is hydrophobic (preferably Leu), and Yaa (Ala or Ser) and Zaa (Gly or Ala) have small, neutral side chains.. It participates in protein modification; lipoprotein biosynthesis (signal peptide cleavage). Its function is as follows. This protein specifically catalyzes the removal of signal peptides from prolipoproteins. The chain is Lipoprotein signal peptidase from Borrelia duttonii (strain Ly).